A 637-amino-acid chain; its full sequence is Phosphomethylpyrimidine synthase (637 aa).

Residues Asn-242, Met-271, Tyr-300, His-336, 356-358 (SRG), 397-400 (DGLR), and Glu-436 each bind substrate. Residue His-440 coordinates Zn(2+). Tyr-463 provides a ligand contact to substrate. Residue His-504 participates in Zn(2+) binding. The [4Fe-4S] cluster site is built by Cys-584, Cys-587, and Cys-592.

This sequence belongs to the ThiC family. In terms of assembly, homodimer. It depends on [4Fe-4S] cluster as a cofactor.

The enzyme catalyses 5-amino-1-(5-phospho-beta-D-ribosyl)imidazole + S-adenosyl-L-methionine = 4-amino-2-methyl-5-(phosphooxymethyl)pyrimidine + CO + 5'-deoxyadenosine + formate + L-methionine + 3 H(+). It participates in cofactor biosynthesis; thiamine diphosphate biosynthesis. Catalyzes the synthesis of the hydroxymethylpyrimidine phosphate (HMP-P) moiety of thiamine from aminoimidazole ribotide (AIR) in a radical S-adenosyl-L-methionine (SAM)-dependent reaction. This is Phosphomethylpyrimidine synthase from Bordetella avium (strain 197N).